Here is a 295-residue protein sequence, read N- to C-terminus: Protease HtpX (295 aa).

A run of 2 helical transmembrane segments spans residues 4–24 and 41–61; these read ILLF…TLSL and SQLL…SLFI. A Zn(2+)-binding site is contributed by His-147. The active site involves Glu-148. His-151 contributes to the Zn(2+) binding site. Transmembrane regions (helical) follow at residues 158–178 and 199–219; these read VTLA…ARII and IATI…VMWF. Glu-224 contributes to the Zn(2+) binding site.

This sequence belongs to the peptidase M48B family. It depends on Zn(2+) as a cofactor.

It is found in the cell inner membrane. The sequence is that of Protease HtpX from Pseudomonas fluorescens (strain Pf0-1).